Consider the following 429-residue polypeptide: MATLSFVFLLLGAVSWPPASASGQEFWPGQSAADILSGAASRRRYLLYDVNPPEGFNLRRDVYIRIASLLKTLLKTEEWVLVLPPWGRLYHWQSPDIHQVRIPWSEFFDLPSLNKNIPVIEYEQFIAESGGPFIDQVYVLQSYAEGWKEGTWEEKVDERPCIDQLLYSQDKHEYYRGWFWGYEETRGLNVSCLSVQGSASIVAPLLLRNTSARSVMLDRAENLLHDHYGGKEYWDTRRSMVFARHLREVGDEFRSRHLNSTDDADGIPFQEDWTKMKVKLGSALGGPYLGVHLRRKDFIWGHRQDVPSLEGAVRKIRSLMKTHRLDKVFVATDAVRKEYEELKKLLPEMVRFEPTWEELELYKDGGVAIIDQWICAHARFFIGTSVSTFSFRIHEEREILGLDPKTTYNRFCGDQEKACEQPTHWKITY.

An N-terminal signal peptide occupies residues 1–21 (MATLSFVFLLLGAVSWPPASA). 53–57 (PEGFN) serves as a coordination point for GDP-beta-L-fucose. The active-site Proton acceptor is E54. C161 and C192 are joined by a disulfide. Residues N189, N209, and N259 are each glycosylated (N-linked (GlcNAc...) asparagine). GDP-beta-L-fucose is bound by residues 292–294 (HLR), D371, and 388–389 (TF). A disulfide bridge connects residues C412 and C419.

This sequence belongs to the glycosyltransferase 68 family.

The protein resides in the endoplasmic reticulum. It localises to the golgi apparatus. The enzyme catalyses L-seryl-[protein] + GDP-beta-L-fucose = 3-O-(alpha-L-fucosyl)-L-seryl-[protein] + GDP + H(+). It carries out the reaction L-threonyl-[protein] + GDP-beta-L-fucose = 3-O-(alpha-L-fucosyl)-L-threonyl-[protein] + GDP + H(+). Its pathway is protein modification; protein glycosylation. Catalyzes the reaction that attaches fucose through an O-glycosidic linkage to a conserved serine or threonine residue in the consensus sequence C1-X-X-S/T-C2 of thrombospondin type I repeats (TSRs) where C1 and C2 are the first and second cysteines of the repeat, respectively. O-fucosylates members of several protein families including the ADAMTS, the thrombospondin (TSP) and spondin families. Required for the proper secretion of ADAMTS family members such as ADAMTSL1 and ADAMTS13. The O-fucosylation of TSRs is also required for restricting epithelial to mesenchymal transition (EMT), maintaining the correct patterning of mesoderm and localization of the definite endoderm. The sequence is that of GDP-fucose protein O-fucosyltransferase 2 (POFUT2) from Pan troglodytes (Chimpanzee).